The sequence spans 380 residues: MILRLKDQTLIKINSTRSYLSSLVFRRDSHSQARTKPDHDRRRRGYERDVRIEEKKEHDGLFLCKSKGQHLLTNTRILDSIVRSSDIRPTDTVLEIGPGTGNLTMKLLEAAQNVVAVELDKRMVEILRKRVSDHGFADKLTIIQKDVLKTDFPHFDLVVANIPYNISSPLVAKLVYGSNTFRSATLLLQKEFSRRLLANPGDSDFNRLAVNVKLVADVKFVMDVSKREFVPPPKVDSSVIRITPKEIIPDVNVQEWLAFTRTCFGKKNKTLGSMFRQKKKVMELQSLSAGRHGSNVEVMNQTGGDSDSDVEEDGKDDLLCLDTDASMFKERVIEILRTNGFEEKRPSKLSHRELLHLLSLFNQAGIFFHDITSLQMDLHE.

Residues 1-26 constitute a mitochondrion transit peptide; the sequence is MILRLKDQTLIKINSTRSYLSSLVFR. His-70, Leu-72, Gly-97, Glu-118, Asp-146, and Asn-161 together coordinate S-adenosyl-L-methionine.

It belongs to the class I-like SAM-binding methyltransferase superfamily. rRNA adenine N(6)-methyltransferase family.

The protein resides in the mitochondrion. The enzyme catalyses adenosine(1914)/adenosine(1915) in 18S rRNA + 4 S-adenosyl-L-methionine = N(6)-dimethyladenosine(1914)/N(6)-dimethyladenosine(1915) in 18S rRNA + 4 S-adenosyl-L-homocysteine + 4 H(+). Its function is as follows. N6-adenine methyltransferase which modifies the AA dinucleotide at the plant mitochondrial 18S rRNA nucleotides A1914 and A1915. Not active as mitochondrial transcription factor. The polypeptide is Ribosomal RNA small subunit methyltransferase, mitochondrial (Arabidopsis thaliana (Mouse-ear cress)).